A 335-amino-acid polypeptide reads, in one-letter code: Glycerol-3-phosphate dehydrogenase [NAD(P)+] (335 aa).

NADPH-binding residues include serine 10, phenylalanine 11, arginine 31, and lysine 105. Sn-glycerol 3-phosphate-binding residues include lysine 105, glycine 136, and serine 138. Position 140 (alanine 140) interacts with NADPH. Residues lysine 191, aspartate 244, serine 254, arginine 255, and asparagine 256 each contribute to the sn-glycerol 3-phosphate site. Lysine 191 acts as the Proton acceptor in catalysis. Arginine 255 is an NADPH binding site. Residues valine 279 and glutamate 281 each contribute to the NADPH site.

Belongs to the NAD-dependent glycerol-3-phosphate dehydrogenase family.

It is found in the cytoplasm. The enzyme catalyses sn-glycerol 3-phosphate + NAD(+) = dihydroxyacetone phosphate + NADH + H(+). The catalysed reaction is sn-glycerol 3-phosphate + NADP(+) = dihydroxyacetone phosphate + NADPH + H(+). The protein operates within membrane lipid metabolism; glycerophospholipid metabolism. Functionally, catalyzes the reduction of the glycolytic intermediate dihydroxyacetone phosphate (DHAP) to sn-glycerol 3-phosphate (G3P), the key precursor for phospholipid synthesis. The sequence is that of Glycerol-3-phosphate dehydrogenase [NAD(P)+] from Leptospira interrogans serogroup Icterohaemorrhagiae serovar Lai (strain 56601).